The following is a 276-amino-acid chain: NH(3)-dependent NAD(+) synthetase (276 aa).

43–50 (GISGGVDS) is an ATP binding site. A Mg(2+)-binding site is contributed by D49. R146 lines the deamido-NAD(+) pocket. An ATP-binding site is contributed by T166. Mg(2+) is bound at residue E171. Positions 179 and 186 each coordinate deamido-NAD(+). The ATP site is built by K195 and T217. 266 to 267 (HK) contributes to the deamido-NAD(+) binding site.

Belongs to the NAD synthetase family. Homodimer.

It carries out the reaction deamido-NAD(+) + NH4(+) + ATP = AMP + diphosphate + NAD(+) + H(+). The protein operates within cofactor biosynthesis; NAD(+) biosynthesis; NAD(+) from deamido-NAD(+) (ammonia route): step 1/1. In terms of biological role, catalyzes the ATP-dependent amidation of deamido-NAD to form NAD. Uses ammonia as a nitrogen source. The polypeptide is NH(3)-dependent NAD(+) synthetase (Shewanella baltica (strain OS185)).